The chain runs to 505 residues: GMP synthase [glutamine-hydrolyzing] (505 aa).

Residues 2-190 (SVVILDFGSQ…FLEICGVARD (189 aa)) form the Glutamine amidotransferase type-1 domain. The active-site Nucleophile is Cys-79. Catalysis depends on residues His-165 and Glu-167. The GMPS ATP-PPase domain maps to 191-380 (WNAEHIVDEL…LGLPDAIRMR (190 aa)). 218–224 (SGGVDSS) is a binding site for ATP.

In terms of assembly, homodimer.

It catalyses the reaction XMP + L-glutamine + ATP + H2O = GMP + L-glutamate + AMP + diphosphate + 2 H(+). Its pathway is purine metabolism; GMP biosynthesis; GMP from XMP (L-Gln route): step 1/1. Its function is as follows. Catalyzes the synthesis of GMP from XMP. This Deinococcus geothermalis (strain DSM 11300 / CIP 105573 / AG-3a) protein is GMP synthase [glutamine-hydrolyzing].